A 63-amino-acid chain; its full sequence is Large ribosomal subunit protein bL28 (63 aa).

Belongs to the bacterial ribosomal protein bL28 family.

This is Large ribosomal subunit protein bL28 from Mycoplasmopsis synoviae (strain 53) (Mycoplasma synoviae).